Consider the following 463-residue polypeptide: UDP-N-acetylmuramoylalanine--D-glutamate ligase (463 aa).

116–122 (GTNGKTT) contacts ATP.

The protein belongs to the MurCDEF family.

It is found in the cytoplasm. The enzyme catalyses UDP-N-acetyl-alpha-D-muramoyl-L-alanine + D-glutamate + ATP = UDP-N-acetyl-alpha-D-muramoyl-L-alanyl-D-glutamate + ADP + phosphate + H(+). It participates in cell wall biogenesis; peptidoglycan biosynthesis. Cell wall formation. Catalyzes the addition of glutamate to the nucleotide precursor UDP-N-acetylmuramoyl-L-alanine (UMA). This chain is UDP-N-acetylmuramoylalanine--D-glutamate ligase, found in Synechococcus elongatus (strain ATCC 33912 / PCC 7942 / FACHB-805) (Anacystis nidulans R2).